Reading from the N-terminus, the 333-residue chain is Protoheme IX farnesyltransferase (333 aa).

The next 8 helical transmembrane spans lie at 36-56 (LIPLLLATTLGGMALTEGWPL), 61-81 (LVCTLGGGALAAAAAGVLNCL), 107-127 (AAFAGAVSCALAAATLLVSGV), 130-150 (LAAGLSLLGLCSYVLLYTALL), 158-178 (IVIGGVAGAIPPLVGAAAATG), 186-206 (WLFALVMVWTPAHFWALALLL), 243-263 (FLGVWALPEGGLLYGLLLLPF), and 284-304 (AKGLFRWSILYLFGICLLLVF).

This sequence belongs to the UbiA prenyltransferase family. Protoheme IX farnesyltransferase subfamily.

The protein resides in the cell inner membrane. It carries out the reaction heme b + (2E,6E)-farnesyl diphosphate + H2O = Fe(II)-heme o + diphosphate. The protein operates within porphyrin-containing compound metabolism; heme O biosynthesis; heme O from protoheme: step 1/1. Its function is as follows. Converts heme B (protoheme IX) to heme O by substitution of the vinyl group on carbon 2 of heme B porphyrin ring with a hydroxyethyl farnesyl side group. This chain is Protoheme IX farnesyltransferase, found in Synechococcus sp. (strain WH7803).